We begin with the raw amino-acid sequence, 106 residues long: Large ribosomal subunit protein eL42 (106 aa).

The tract at residues Tyr26–Lys53 is disordered.

This sequence belongs to the eukaryotic ribosomal protein eL42 family. Component of the large ribosomal subunit.

It localises to the cytoplasm. In terms of biological role, component of the large ribosomal subunit. The ribosome is a large ribonucleoprotein complex responsible for the synthesis of proteins in the cell. The polypeptide is Large ribosomal subunit protein eL42 (rpl36a) (Danio rerio (Zebrafish)).